Reading from the N-terminus, the 549-residue chain is FERM domain-containing protein 1 (549 aa).

A disordered region spans residues Met1–Gln40. The region spanning Arg54 to Arg369 is the FERM domain. Disordered regions lie at residues Ser377–Gly400 and His422–Ala464. Low complexity predominate over residues Ser430–Arg443. The span at Gly444 to Gln462 shows a compositional bias: polar residues.

The chain is FERM domain-containing protein 1 (FRMD1) from Homo sapiens (Human).